The following is a 419-amino-acid chain: rRNA methyltransferase 3, mitochondrial (419 aa).

The N-terminal 39 residues, 1–39 (MAALCGGMLRGCILKPLGLSGSLQLKRNVRALRRTPVRV), are a transit peptide targeting the mitochondrion. A disordered region spans residues 42–68 (ADEEGRERKQVEASRQRQPRQNESQAC). Positions 44-56 (EEGRERKQVEASR) are enriched in basic and acidic residues. Residues Gly-357, Ile-381, and Leu-390 each coordinate S-adenosyl-L-methionine.

It belongs to the class IV-like SAM-binding methyltransferase superfamily. RNA methyltransferase TrmH family.

The protein localises to the mitochondrion. It catalyses the reaction a uridine in rRNA + S-adenosyl-L-methionine = a 2'-O-methyluridine in rRNA + S-adenosyl-L-homocysteine + H(+). S-adenosyl-L-methionine-dependent 2'-O-ribose methyltransferase that catalyzes the formation of 2'-O-methylguanosine at position 1370 (Gm1370) in the mitochondrial large subunit ribosomal RNA (mtLSU rRNA), a conserved modification in the peptidyl transferase domain of the mtLSU rRNA. Also required for formation of 2'-O-methyluridine at position 1369 (Um1369) mediated by MRM2. This Xenopus laevis (African clawed frog) protein is rRNA methyltransferase 3, mitochondrial.